The following is a 159-amino-acid chain: Ribosomal RNA large subunit methyltransferase H (159 aa).

S-adenosyl-L-methionine contacts are provided by residues leucine 76, glycine 108, and 127-132; that span reads FGQLTL.

It belongs to the RNA methyltransferase RlmH family. As to quaternary structure, homodimer.

The protein resides in the cytoplasm. It carries out the reaction pseudouridine(1915) in 23S rRNA + S-adenosyl-L-methionine = N(3)-methylpseudouridine(1915) in 23S rRNA + S-adenosyl-L-homocysteine + H(+). Specifically methylates the pseudouridine at position 1915 (m3Psi1915) in 23S rRNA. The protein is Ribosomal RNA large subunit methyltransferase H of Streptococcus gordonii (strain Challis / ATCC 35105 / BCRC 15272 / CH1 / DL1 / V288).